The following is a 147-amino-acid chain: Hemoglobin subunit epsilon-Y2 (147 aa).

A Globin domain is found at 3–147 (NFTAEEKTLI…VATALSHKYH (145 aa)). The residue at position 51 (Ser-51) is a Phosphoserine. The heme b site is built by His-64 and His-93.

This sequence belongs to the globin family. In terms of tissue distribution, high expression in yolk sac blood islands, fetal liver, and embryonic erythrocytes. Very low levels in adult liver and spleen.

Hemoglobin epsilon chain is a beta-type chain found in early embryos. This chain is Hemoglobin subunit epsilon-Y2 (Hbb-y), found in Mus musculus (Mouse).